Consider the following 206-residue polypeptide: Thymidylate kinase (206 aa).

16 to 23 (GIDGTGKS) contacts ATP.

Belongs to the thymidylate kinase family.

It catalyses the reaction dTMP + ATP = dTDP + ADP. Functionally, phosphorylation of dTMP to form dTDP in both de novo and salvage pathways of dTTP synthesis. The sequence is that of Thymidylate kinase from Akkermansia muciniphila (strain ATCC BAA-835 / DSM 22959 / JCM 33894 / BCRC 81048 / CCUG 64013 / CIP 107961 / Muc).